Here is a 304-residue protein sequence, read N- to C-terminus: Acetaldehyde dehydrogenase 2 (304 aa).

Cys-131 functions as the Acyl-thioester intermediate in the catalytic mechanism. Residues 162–170 (SAGPGTRKN) and Asn-273 contribute to the NAD(+) site.

The protein belongs to the acetaldehyde dehydrogenase family.

It carries out the reaction acetaldehyde + NAD(+) + CoA = acetyl-CoA + NADH + H(+). The sequence is that of Acetaldehyde dehydrogenase 2 from Dechloromonas aromatica (strain RCB).